The sequence spans 244 residues: Probable 2-phosphosulfolactate phosphatase (244 aa).

It belongs to the ComB family. Requires Mg(2+) as cofactor.

It catalyses the reaction (2R)-O-phospho-3-sulfolactate + H2O = (2R)-3-sulfolactate + phosphate. The protein is Probable 2-phosphosulfolactate phosphatase of Thermosynechococcus vestitus (strain NIES-2133 / IAM M-273 / BP-1).